The chain runs to 255 residues: MFDFWVGPFYVGFFGVTTCLFASLGIALILLGTALGPTWNPLRINIAPPDLSYGLGFAPLMKGGLWQLITICAIGRFCCWALRQVEIARKLGMGLHIPFAFSFAIFAYLALVVIRPLLLGAWGHGXPYGILSHLDWVSNIGYQFLHFHYNPAHMIGITFFFTNCMAFGMHGSIILSVLNPGKGEKVKGSEHENTFFRDVVGYSIGTLGIHRLGVFLAISAAFWSAVCIILSGPFWTRGWPEWWNWWLQFPYSFVG.

3 helical membrane-spanning segments follow: residues 12 to 35 (GFFG…GTAL), 64 to 92 (GLWQ…RKLG), and 95 to 120 (LHIP…LLLG). His-133 and His-153 together coordinate (7R,8Z)-bacteriochlorophyll b. The chain crosses the membrane as a helical span at residues 150 to 179 (NPAHMIGITFFFTNCMAFGMHGSIILSVLN). Position 170 (His-170) interacts with Fe cation. Phe-196 is a binding site for a ubiquinone. The helical transmembrane segment at 205–231 (GTLGIHRLGVFLAISAAFWSAVCIILS) threads the bilayer. His-210 provides a ligand contact to Fe cation.

Belongs to the reaction center PufL/M/PsbA/D family. As to quaternary structure, reaction center is composed of four bacteriochlorophylls, two bacteriopheophytins, two ubiquinones, one iron, and three highly hydrophobic polypeptide chains (designated L, M, and H).

The protein resides in the cellular chromatophore membrane. The reaction center is a membrane-bound complex that mediates the initial photochemical event in the electron transfer process of photosynthesis. This is Reaction center protein L chain (pufL) from Pararhodospirillum photometricum (Rhodospirillum photometricum).